A 133-amino-acid chain; its full sequence is MNRLSCFLLVIGLCIGLSNANLIWNEKNTVFFKSSLGRNNVLKIHCTSEDNLGFHFLRPGETYDFSFHDSIVRSDFYCELWQGPNFKFHASFMAYQGGGLIVHYGKKNFWDAREDGIYFTHGKETPKLEYKWK.

An N-terminal signal peptide occupies residues 1–20 (MNRLSCFLLVIGLCIGLSNA).

The protein belongs to the plant self-incompatibility (S1) protein family.

Its subcellular location is the secreted. The polypeptide is S-protein homolog 9 (Arabidopsis thaliana (Mouse-ear cress)).